The primary structure comprises 421 residues: Eukaryotic translation initiation factor 3 subunit E (421 aa).

One can recognise a PCI domain in the interval 215–394 (FFQNDTKGKD…STVILNHPSV (180 aa)).

Belongs to the eIF-3 subunit E family. As to quaternary structure, component of the eukaryotic translation initiation factor 3 (eIF-3) complex.

It localises to the cytoplasm. Its function is as follows. Component of the eukaryotic translation initiation factor 3 (eIF-3) complex, which is involved in protein synthesis of a specialized repertoire of mRNAs and, together with other initiation factors, stimulates binding of mRNA and methionyl-tRNAi to the 40S ribosome. The eIF-3 complex specifically targets and initiates translation of a subset of mRNAs involved in cell proliferation. This is Eukaryotic translation initiation factor 3 subunit E from Yarrowia lipolytica (strain CLIB 122 / E 150) (Yeast).